A 285-amino-acid chain; its full sequence is Tetraspanin-3 (285 aa).

Topologically, residues 1–6 are cytoplasmic; sequence MRTSNH. The helical transmembrane segment at 7–27 threads the bilayer; it reads LIGLVNFLTFLLSIPILGGGI. Topologically, residues 28–43 are extracellular; it reads WLSSRANSTDCLRFLQ. An N-linked (GlcNAc...) asparagine glycan is attached at N34. Residues 44–64 form a helical membrane-spanning segment; the sequence is WPLIVIGISIMVVSLAGFAGA. Over 65–71 the chain is Cytoplasmic; sequence CYRNKFL. Residues 72–92 form a helical membrane-spanning segment; sequence MWLYLVVMLLIIAALIGFIIF. Over 93-235 the chain is Extracellular; it reads AYAVTDKGSG…LGSLKKSWRK (143 aa). An N-linked (GlcNAc...) asparagine glycan is attached at N187. A helical transmembrane segment spans residues 236–256; that stretch reads VSVINIVVLIILVIFYVIAYA. Residues 257–285 lie on the Cytoplasmic side of the membrane; that stretch reads AYRNVKRIDNDEPAGEARMTKSHPSHFHL.

This sequence belongs to the tetraspanin (TM4SF) family.

The protein resides in the cell membrane. Functionally, may be involved in the regulation of cell differentiation. The chain is Tetraspanin-3 (TET3) from Arabidopsis thaliana (Mouse-ear cress).